The sequence spans 357 residues: Dual-specificity RNA methyltransferase RlmN (357 aa).

The active-site Proton acceptor is the Glu89. The 232-residue stretch at 109–340 folds into the Radical SAM core domain; sequence EGEKYTVCVS…CTIRESKALD (232 aa). An intrachain disulfide couples Cys116 to Cys345. 3 residues coordinate [4Fe-4S] cluster: Cys123, Cys127, and Cys130. S-adenosyl-L-methionine-binding positions include 173–174, Ser203, 226–228, and Asn302; these read GE and SLH. The active-site S-methylcysteine intermediate is the Cys345.

The protein belongs to the radical SAM superfamily. RlmN family. Requires [4Fe-4S] cluster as cofactor.

Its subcellular location is the cytoplasm. It carries out the reaction adenosine(2503) in 23S rRNA + 2 reduced [2Fe-2S]-[ferredoxin] + 2 S-adenosyl-L-methionine = 2-methyladenosine(2503) in 23S rRNA + 5'-deoxyadenosine + L-methionine + 2 oxidized [2Fe-2S]-[ferredoxin] + S-adenosyl-L-homocysteine. The enzyme catalyses adenosine(37) in tRNA + 2 reduced [2Fe-2S]-[ferredoxin] + 2 S-adenosyl-L-methionine = 2-methyladenosine(37) in tRNA + 5'-deoxyadenosine + L-methionine + 2 oxidized [2Fe-2S]-[ferredoxin] + S-adenosyl-L-homocysteine. Its function is as follows. Specifically methylates position 2 of adenine 2503 in 23S rRNA and position 2 of adenine 37 in tRNAs. m2A2503 modification seems to play a crucial role in the proofreading step occurring at the peptidyl transferase center and thus would serve to optimize ribosomal fidelity. This is Dual-specificity RNA methyltransferase RlmN from Helicobacter pylori (strain HPAG1).